The sequence spans 675 residues: MESGTSSPQPPQLDPLDAFPQKGLEPGDIAVLVLYFLFVLAVGLWSTVKTKRDTVKGYFLAGGDMVWWPVGASLFASNVGSGHFIGLAGSGAATGISVSAYELNGLFSVLMLAWIFLPIYIAGQVTTMPEYLRKRFGGIRIPIILAVLYLFIYIFTKISVDMYAGAIFIQQSLHLDLYLAIVGLLAITAVYTVAGGLAAVIYTDALQTLIMLIGALTLMGYSFAAVGGMEGLKEKYFLALASNRSENSSCGLPREDAFHIFRDPLTSDLPWPGVLFGMSIPSLWYWCTDQVIVQRTLAAKNLSHAKGGALMAAYLKVLPLFIMVFPGMVSRILFPDQVACADPEICQKICSNPSGCSDIAYPKLVLELLPTGLRGLMMAVMVAALMSSLTSIFNSASTIFTMDLWNHLRPRASEKELMIVGRVFVLLLVLVSILWIPVVQASQGGQLFIYIQSISSYLQPPVAVVFIMGCFWKRTNEKGAFWGLISGLLLGLVRLVLDFIYVQPRCDQPDERPVLVKSIHYLYFSMILSTVTLITVSTVSWFTEPPSKEMVSHLTWFTRHDPVVQKEQAPPAAPLSLTLSQNGMPEASSSSSVQFEMVQENTSKTHSCDMTPKQSKVVKAILWLCGIQEKGKEELPARAEAIIVSLEENPLVKTLLDVNLIFCVSCAIFIWGYFA.

At 1–27 the chain is on the extracellular side; it reads MESGTSSPQPPQLDPLDAFPQKGLEPG. Residues 28 to 48 traverse the membrane as a helical segment; sequence DIAVLVLYFLFVLAVGLWSTV. The Cytoplasmic portion of the chain corresponds to 49–65; the sequence is KTKRDTVKGYFLAGGDM. The helical transmembrane segment at 66–88 threads the bilayer; the sequence is VWWPVGASLFASNVGSGHFIGLA. Over 89–102 the chain is Extracellular; the sequence is GSGAATGISVSAYE. Residues 103 to 123 form a helical membrane-spanning segment; it reads LNGLFSVLMLAWIFLPIYIAG. Topologically, residues 124–135 are cytoplasmic; that stretch reads QVTTMPEYLRKR. Residues 136 to 156 form a helical membrane-spanning segment; that stretch reads FGGIRIPIILAVLYLFIYIFT. At 157-180 the chain is on the extracellular side; sequence KISVDMYAGAIFIQQSLHLDLYLA. A helical transmembrane segment spans residues 181 to 201; the sequence is IVGLLAITAVYTVAGGLAAVI. The Cytoplasmic segment spans residues 202–208; sequence YTDALQT. A helical membrane pass occupies residues 209–229; it reads LIMLIGALTLMGYSFAAVGGM. The Extracellular portion of the chain corresponds to 230–272; sequence EGLKEKYFLALASNRSENSSCGLPREDAFHIFRDPLTSDLPWP. The helical transmembrane segment at 273–293 threads the bilayer; it reads GVLFGMSIPSLWYWCTDQVIV. Over 294 to 308 the chain is Cytoplasmic; the sequence is QRTLAAKNLSHAKGG. A helical membrane pass occupies residues 309 to 329; that stretch reads ALMAAYLKVLPLFIMVFPGMV. At 330–375 the chain is on the extracellular side; the sequence is SRILFPDQVACADPEICQKICSNPSGCSDIAYPKLVLELLPTGLRG. A helical membrane pass occupies residues 376-396; it reads LMMAVMVAALMSSLTSIFNSA. Topologically, residues 397-418 are cytoplasmic; sequence STIFTMDLWNHLRPRASEKELM. Residues 419–439 form a helical membrane-spanning segment; the sequence is IVGRVFVLLLVLVSILWIPVV. Residues 440–446 are Extracellular-facing; that stretch reads QASQGGQ. A helical transmembrane segment spans residues 447–467; sequence LFIYIQSISSYLQPPVAVVFI. The Cytoplasmic segment spans residues 468-479; the sequence is MGCFWKRTNEKG. A helical transmembrane segment spans residues 480–500; sequence AFWGLISGLLLGLVRLVLDFI. The Extracellular portion of the chain corresponds to 501–521; sequence YVQPRCDQPDERPVLVKSIHY. A helical transmembrane segment spans residues 522–542; that stretch reads LYFSMILSTVTLITVSTVSWF. Topologically, residues 543–654 are cytoplasmic; it reads TEPPSKEMVS…SLEENPLVKT (112 aa). A helical membrane pass occupies residues 655–675; the sequence is LLDVNLIFCVSCAIFIWGYFA.

This sequence belongs to the sodium:solute symporter (SSF) (TC 2.A.21) family. As to expression, highest expression in heart, skeletal muscle, kidney, liver and placenta. Weaker expression in brain, colon, spleen, lung and peripheral blood leukocytes.

The protein resides in the membrane. It localises to the apical cell membrane. The enzyme catalyses myo-inositol(out) + 2 Na(+)(out) = myo-inositol(in) + 2 Na(+)(in). It catalyses the reaction 1D-chiro-inositol(out) + 2 Na(+)(out) = 1D-chiro-inositol(in) + 2 Na(+)(in). The catalysed reaction is D-glucose(out) + 2 Na(+)(out) = D-glucose(in) + 2 Na(+)(in). It carries out the reaction D-xylose(out) + 2 Na(+)(out) = D-xylose(in) + 2 Na(+)(in). With respect to regulation, MI transport activity inhibited by D-chiro-inositol (DCI), phlorizin (Pz) and sodium (Na(+)). Insulin increases D-chiro-inositol uptake. Involved in the sodium-dependent cotransport of myo-inositol (MI) with a Na(+):MI stoichiometry of 2:1. Exclusively responsible for apical MI transport and absorption in intestine. Can also transport D-chiro-inositol (DCI) but not L-fucose. Exhibits stereospecific cotransport of both D-glucose and D-xylose. May induce apoptosis through the TNF-alpha, PDCD1 pathway. May play a role in the regulation of MI concentration in serum, involving reabsorption in at least the proximal tubule of the kidney. The protein is Sodium/myo-inositol cotransporter 2 of Homo sapiens (Human).